Consider the following 205-residue polypeptide: CASP-like protein 3A1 (205 aa).

The Cytoplasmic segment spans residues 1–39 (MGIGMDSSTMSGPLVAHSGILDGDYEKRPAVCKMQMRFD). Residues 40 to 60 (LANVGLRVLSLACSLVALVSM) form a helical membrane-spanning segment. At 61–89 (ASNQESGVVTVFGFKLPVYSKWSYSDSFE) the chain is on the extracellular side. A helical transmembrane segment spans residues 90–110 (FLVGASAAAAAHSLLQLLLCG). The Cytoplasmic portion of the chain corresponds to 111-125 (MKMVKRASTIPSRNH). Residues 126–146 (AWLLFAGDQVFAYGMLAAASA) traverse the membrane as a helical segment. The Extracellular portion of the chain corresponds to 147 to 176 (AAGVTNLNRTGFRHSDLPNFCKPLHRFCDK). A glycan (N-linked (GlcNAc...) asparagine) is linked at Asn154. Residues 177-197 (AAISIVFAFISSLILGGSAVL) traverse the membrane as a helical segment. The Cytoplasmic segment spans residues 198–205 (DVFWLSKN).

The protein belongs to the Casparian strip membrane proteins (CASP) family. In terms of assembly, homodimer and heterodimers.

The protein resides in the cell membrane. The chain is CASP-like protein 3A1 from Picea sitchensis (Sitka spruce).